The primary structure comprises 118 residues: NADPH-dependent 7-cyano-7-deazaguanine reductase (118 aa).

Residue cysteine 31 is the Thioimide intermediate of the active site. Aspartate 38 acts as the Proton donor in catalysis. Residues isoleucine 53–leucine 55 and tyrosine 72–glutamate 73 contribute to the substrate site.

This sequence belongs to the GTP cyclohydrolase I family. QueF type 1 subfamily.

It localises to the cytoplasm. It carries out the reaction 7-aminomethyl-7-carbaguanine + 2 NADP(+) = 7-cyano-7-deazaguanine + 2 NADPH + 3 H(+). It participates in tRNA modification; tRNA-queuosine biosynthesis. Catalyzes the NADPH-dependent reduction of 7-cyano-7-deazaguanine (preQ0) to 7-aminomethyl-7-deazaguanine (preQ1). This Prosthecochloris aestuarii (strain DSM 271 / SK 413) protein is NADPH-dependent 7-cyano-7-deazaguanine reductase.